The primary structure comprises 1032 residues: Probable ATP-dependent RNA helicase DDX46 (1032 aa).

A compositionally biased stretch (basic residues) spans 1–24 (MGRESRHYRKRSASRGRSGSRSRS). A disordered region spans residues 1-228 (MGRESRHYRK…EMEGEELDPL (228 aa)). Gly-2 carries N-myristoyl glycine lipidation. Residues 26–49 (SPSDKRSKRGDDRRSRSRDRDRRR) show a composition bias toward basic and acidic residues. 2 stretches are compositionally biased toward basic residues: residues 50–73 (ERSRSRDKRRSRSRDRKRLRRSRS) and 81–103 (ERRRSRSRDRRRSRSRSRGRRSR). A compositionally biased stretch (basic and acidic residues) spans 112-200 (KKTENRSRSK…EMKQGKKWSL (89 aa)). Residues 152–197 (DQNKLEEEMRKRKERVEKWREEQRKKAMENIGELKKEIEEMKQGKK) adopt a coiled-coil conformation. Lys-186 is covalently cross-linked (Glycyl lysine isopeptide (Lys-Gly) (interchain with G-Cter in SUMO2)). Ser-199 carries the post-translational modification Phosphoserine. 2 stretches are compositionally biased toward acidic residues: residues 201–211 (EDDDDDEDDPA) and 219–228 (EMEGEELDPL). Residue Lys-263 is modified to N6-acetyllysine. Tyr-294 is subject to Phosphotyrosine. Residues Ser-295 and Ser-296 each carry the phosphoserine modification. Lys-325 is covalently cross-linked (Glycyl lysine isopeptide (Lys-Gly) (interchain with G-Cter in SUMO2)). Ser-346 carries the post-translational modification Phosphoserine. The Q motif signature appears at 372-400 (KSWVQCGISMKILNSLKKHGYEKPTPIQT). In terms of domain architecture, Helicase ATP-binding spans 403–581 (IPAIMSGRDL…RRILSKPIEV (179 aa)). ATP is bound at residue 416–423 (AKTGSGKT). The short motif at 529 to 532 (DEAD) is the DEAD box element. Positions 592–753 (DVEQQVIVIE…AVPPDLEKLW (162 aa)) constitute a Helicase C-terminal domain. An N6-acetyllysine modification is found at Lys-776. Lys-779 participates in a covalent cross-link: Glycyl lysine isopeptide (Lys-Gly) (interchain with G-Cter in SUMO2). Ser-804 bears the Phosphoserine mark. At Lys-904 the chain carries N6-acetyllysine. Glycyl lysine isopeptide (Lys-Gly) (interchain with G-Cter in SUMO2) cross-links involve residues Lys-908 and Lys-916. Ser-929 carries the phosphoserine modification.

Belongs to the DEAD box helicase family. DDX46/PRP5 subfamily. As to quaternary structure, component of the 17S U2 SnRNP complex, a ribonucleoprotein complex that contains small nuclear RNA (snRNA) U2 and a number of specific proteins. Within the 17S U2 SnRNP complex, DDX46 is part of the SF3B subcomplex, which is required for 'A' complex assembly formed by the stable binding of U2 snRNP to the branchpoint sequence in pre-mRNA. Recruited to the 17S U2 SnRNP complex following release of DDX42; DDX42 and DDX46 bind the SF3B subcomplex in a competitive manner.

The protein resides in the nucleus speckle. Its subcellular location is the nucleus. It localises to the cajal body. The enzyme catalyses ATP + H2O = ADP + phosphate + H(+). In terms of biological role, component of the 17S U2 SnRNP complex of the spliceosome, a large ribonucleoprotein complex that removes introns from transcribed pre-mRNAs. The 17S U2 SnRNP complex (1) directly participates in early spliceosome assembly and (2) mediates recognition of the intron branch site during pre-mRNA splicing by promoting the selection of the pre-mRNA branch-site adenosine, the nucleophile for the first step of splicing. Within the 17S U2 SnRNP complex, DDX46 plays essential roles during assembly of pre-spliceosome and proofreading of the branch site. The chain is Probable ATP-dependent RNA helicase DDX46 (DDX46) from Pongo abelii (Sumatran orangutan).